Consider the following 350-residue polypeptide: 4-hydroxy-3-methylbut-2-en-1-yl diphosphate synthase (flavodoxin) (350 aa).

Residues C263, C266, C298, and E305 each coordinate [4Fe-4S] cluster.

It belongs to the IspG family. It depends on [4Fe-4S] cluster as a cofactor.

It carries out the reaction (2E)-4-hydroxy-3-methylbut-2-enyl diphosphate + oxidized [flavodoxin] + H2O + 2 H(+) = 2-C-methyl-D-erythritol 2,4-cyclic diphosphate + reduced [flavodoxin]. Its pathway is isoprenoid biosynthesis; isopentenyl diphosphate biosynthesis via DXP pathway; isopentenyl diphosphate from 1-deoxy-D-xylulose 5-phosphate: step 5/6. Converts 2C-methyl-D-erythritol 2,4-cyclodiphosphate (ME-2,4cPP) into 1-hydroxy-2-methyl-2-(E)-butenyl 4-diphosphate. This chain is 4-hydroxy-3-methylbut-2-en-1-yl diphosphate synthase (flavodoxin), found in Nautilia profundicola (strain ATCC BAA-1463 / DSM 18972 / AmH).